We begin with the raw amino-acid sequence, 438 residues long: UDP-N-acetylmuramoylalanine--D-glutamate ligase (438 aa).

105–111 (GSNGKTT) contacts ATP.

It belongs to the MurCDEF family.

It is found in the cytoplasm. The catalysed reaction is UDP-N-acetyl-alpha-D-muramoyl-L-alanine + D-glutamate + ATP = UDP-N-acetyl-alpha-D-muramoyl-L-alanyl-D-glutamate + ADP + phosphate + H(+). Its pathway is cell wall biogenesis; peptidoglycan biosynthesis. In terms of biological role, cell wall formation. Catalyzes the addition of glutamate to the nucleotide precursor UDP-N-acetylmuramoyl-L-alanine (UMA). The polypeptide is UDP-N-acetylmuramoylalanine--D-glutamate ligase (Oenococcus oeni (strain ATCC BAA-331 / PSU-1)).